The sequence spans 327 residues: Protoheme IX farnesyltransferase (327 aa).

The next 8 membrane-spanning stretches (helical) occupy residues 35-55 (LIPL…GWPL), 60-80 (LVCT…LNCL), 106-126 (SAFI…VSGV), 129-149 (LAAG…TALL), 157-177 (IVIG…AATG), 185-205 (WLFA…ALLL), 234-254 (GWIT…GGAF), and 283-303 (AKAL…LLIL).

It belongs to the UbiA prenyltransferase family. Protoheme IX farnesyltransferase subfamily.

Its subcellular location is the cell inner membrane. It carries out the reaction heme b + (2E,6E)-farnesyl diphosphate + H2O = Fe(II)-heme o + diphosphate. It functions in the pathway porphyrin-containing compound metabolism; heme O biosynthesis; heme O from protoheme: step 1/1. In terms of biological role, converts heme B (protoheme IX) to heme O by substitution of the vinyl group on carbon 2 of heme B porphyrin ring with a hydroxyethyl farnesyl side group. This chain is Protoheme IX farnesyltransferase, found in Synechococcus sp. (strain CC9605).